A 495-amino-acid polypeptide reads, in one-letter code: ATP synthase subunit beta, chloroplastic (495 aa).

172 to 179 is a binding site for ATP; sequence GGAGVGKT.

Belongs to the ATPase alpha/beta chains family. As to quaternary structure, F-type ATPases have 2 components, CF(1) - the catalytic core - and CF(0) - the membrane proton channel. CF(1) has five subunits: alpha(3), beta(3), gamma(1), delta(1), epsilon(1). CF(0) has four main subunits: a(1), b(1), b'(1) and c(9-12).

It localises to the plastid. Its subcellular location is the chloroplast thylakoid membrane. The enzyme catalyses ATP + H2O + 4 H(+)(in) = ADP + phosphate + 5 H(+)(out). Produces ATP from ADP in the presence of a proton gradient across the membrane. The catalytic sites are hosted primarily by the beta subunits. This chain is ATP synthase subunit beta, chloroplastic, found in Hyacinthoides non-scripta (English bluebell).